A 143-amino-acid chain; its full sequence is Hemoglobin subunit alpha (143 aa).

The Globin domain maps to 2–143 (VLSPADKTNV…VSTVLVSKYR (142 aa)). Serine 4 bears the Phosphoserine mark. Residue lysine 8 is modified to N6-succinyllysine. Threonine 9 bears the Phosphothreonine mark. The residue at position 12 (lysine 12) is an N6-succinyllysine. Lysine 17 is modified (N6-acetyllysine; alternate). At lysine 17 the chain carries N6-succinyllysine; alternate. Position 25 is a phosphotyrosine (tyrosine 25). Residue serine 36 is modified to Phosphoserine. The residue at position 41 (lysine 41) is an N6-succinyllysine. Position 51 is a phosphoserine (serine 51). Residue histidine 60 participates in O2 binding. Histidine 89 is a binding site for heme b. Phosphoserine is present on serine 104. Threonine 110 carries the post-translational modification Phosphothreonine. Serine 126 carries the post-translational modification Phosphoserine. At threonine 136 the chain carries Phosphothreonine. Serine 140 is subject to Phosphoserine.

This sequence belongs to the globin family. As to quaternary structure, heterotetramer of two alpha chains and two beta chains. In terms of tissue distribution, red blood cells.

In terms of biological role, involved in oxygen transport from the lung to the various peripheral tissues. Functionally, hemopressin acts as an antagonist peptide of the cannabinoid receptor CNR1. Hemopressin-binding efficiently blocks cannabinoid receptor CNR1 and subsequent signaling. This chain is Hemoglobin subunit alpha (HBA), found in Pipistrellus abramus (Japanese pipistrelle).